The following is a 202-amino-acid chain: Small ribosomal subunit protein uS5 (202 aa).

Residues 50-113 (LKQEILNINV…REAKLNLTPV (64 aa)) enclose the S5 DRBM domain.

It belongs to the universal ribosomal protein uS5 family. Part of the 30S ribosomal subunit. Contacts protein S4.

In terms of biological role, with S4 and S12 plays an important role in translational accuracy. The sequence is that of Small ribosomal subunit protein uS5 from Pyrobaculum islandicum (strain DSM 4184 / JCM 9189 / GEO3).